Reading from the N-terminus, the 164-residue chain is ATP synthase subunit b 1 (164 aa).

The chain crosses the membrane as a helical span at residues 8–28 (AETWVAVGFAILMVVFVYFGV).

The protein belongs to the ATPase B chain family. F-type ATPases have 2 components, F(1) - the catalytic core - and F(0) - the membrane proton channel. F(1) has five subunits: alpha(3), beta(3), gamma(1), delta(1), epsilon(1). F(0) has three main subunits: a(1), b(2) and c(10-14). The alpha and beta chains form an alternating ring which encloses part of the gamma chain. F(1) is attached to F(0) by a central stalk formed by the gamma and epsilon chains, while a peripheral stalk is formed by the delta and b chains.

It is found in the cell inner membrane. F(1)F(0) ATP synthase produces ATP from ADP in the presence of a proton or sodium gradient. F-type ATPases consist of two structural domains, F(1) containing the extramembraneous catalytic core and F(0) containing the membrane proton channel, linked together by a central stalk and a peripheral stalk. During catalysis, ATP synthesis in the catalytic domain of F(1) is coupled via a rotary mechanism of the central stalk subunits to proton translocation. In terms of biological role, component of the F(0) channel, it forms part of the peripheral stalk, linking F(1) to F(0). The polypeptide is ATP synthase subunit b 1 (Rhodopseudomonas palustris (strain BisA53)).